The following is a 4377-amino-acid chain: Ankyrin-3 (4377 aa).

The interval M1–S44 is disordered. Basic residues predominate over residues K25–K38. A Phosphoserine modification is found at S39. 23 ANK repeats span residues N73–A102, K106–A135, N139–L168, D172–V201, L203–V230, S234–F263, N267–A296, D300–S329, N333–D362, D366–A395, N399–A428, S432–T461, R465–A494, D498–A527, S531–I560, K564–A593, S597–A626, N630–A659, Q663–L692, S696–A725, M729–A758, N762–E791, and N795–T825. At T468 the chain carries Phosphoserine. The residue at position 623 (S623) is a Phosphoserine. T765 and E791 each carry phosphoserine. Residues S847, S861, S867, S913, S916, S922, S957, S959, and S1113 each carry the phosphoserine modification. ZU5 domains are found at residues F984–R1139 and K1141–C1288. The tract at residues V1273 to E1407 is UPA domain. S1445, S1459, and S1470 each carry phosphoserine. Over residues S1519–S1539 the composition is skewed to low complexity. Positions S1519–I1540 are disordered. S1622, S1625, S1632, I1651, L1658, S1984, S2111, S2123, and S2126 each carry phosphoserine. 15 disordered regions span residues V1968–D1987, T2107–P2159, Y2176–H2245, A2299–M2322, F2383–D2433, D2474–T2508, L2588–I2751, Q2795–S2824, P3036–D3067, T3131–H3272, P3298–P3516, K3538–K3607, G3635–L3718, K3868–K3897, and K4019–T4090. The segment covering P1977–E1986 has biased composition (basic and acidic residues). A compositionally biased stretch (basic and acidic residues) spans F2115 to K2136. Polar residues predominate over residues T2137–S2146. Residues A2299–A2308 show a composition bias toward basic and acidic residues. The segment covering G2390–A2399 has biased composition (acidic residues). A compositionally biased stretch (polar residues) spans L2407 to S2417. Composition is skewed to basic and acidic residues over residues G2497–T2508 and L2588–K2612. A compositionally biased stretch (low complexity) spans S2622–P2631. Polar residues predominate over residues S2706–S2716. Residues L2720–G2742 are compositionally biased toward basic and acidic residues. The segment covering S2796 to D2807 has biased composition (polar residues). 2 stretches are compositionally biased toward polar residues: residues E3154 to P3186 and K3214 to E3224. Basic and acidic residues-rich tracts occupy residues A3227–Q3242 and K3335–E3361. Polar residues predominate over residues S3377–E3402. The segment covering A3409–T3428 has biased composition (acidic residues). Composition is skewed to basic and acidic residues over residues E3465–P3481 and R3549–S3575. Low complexity predominate over residues P3576–P3598. Positions H3637–K3651 are enriched in basic and acidic residues. Polar residues-rich tracts occupy residues V3654 to T3669, E3676 to K3713, H3880 to K3897, and S4033 to K4052. Residues S4053–R4076 show a composition bias toward basic and acidic residues. Positions T4090–I4174 constitute a Death domain. Phosphoserine is present on residues S4211 and S4229. 2 disordered regions span residues N4251 to S4298 and P4323 to S4377. Polar residues predominate over residues P4268–Q4277. 2 positions are modified to phosphoserine: S4290 and S4298. Over residues G4337–E4347 the composition is skewed to basic and acidic residues. Position 4350 is a phosphoserine (S4350). Positions V4362–S4377 are enriched in basic residues.

Directly interacts with DMD and betaDAG1. This interaction does not interfere with binding between DMD and betaDAG1. It is also required for DMD and betaDAG1 retention at costameres. Interacts (via N-terminal ANK repeats) with SCHIP1 isoform 5 (via C-terminus); this interaction is required for the localization at axon initial segments (AISs) and nodes of Ranvier (NRs). May be a constituent of a NFASC/NRCAM/ankyrin G complex. Interacts with RHBG. Interacts with PLEC and FLNC. Interacts with KCNA1; this inhibits channel activity. Interacts (via ANK repeats) with IQCJ-SCHIP1; required for IQCJ-SCHIP1 localization at axon initial segments (AIS) and nodes of Ranvier. Interacts with SCHIP1. Interacts with SCN5A. Interacts with PKP2 and GJA1/CX43. Expressed in brain, neurons, muscles and other tissues.

Its subcellular location is the cytoplasm. The protein localises to the cytoskeleton. It is found in the cell projection. The protein resides in the axon. It localises to the cell membrane. Its subcellular location is the sarcolemma. The protein localises to the postsynaptic cell membrane. It is found in the lysosome. The protein resides in the T-tubule. It localises to the golgi apparatus. Its function is as follows. Membrane-cytoskeleton linker. May participate in the maintenance/targeting of ion channels and cell adhesion molecules at the nodes of Ranvier and axonal initial segments. In skeletal muscle, required for costamere localization of DMD and betaDAG1. Regulates KCNA1 channel activity in function of dietary Mg(2+) levels, and thereby contributes to the regulation of renal Mg(2+) reabsorption. Required for intracellular adhesion and junctional conductance in myocytes, potentially via stabilization of GJA1/CX43 protein abundance and promotion of PKP2, GJA1/CX43, and SCN5A/Nav1.5 localization to cell-cell junctions. In terms of biological role, may be part of a Golgi-specific membrane cytoskeleton in association with beta-spectrin. This is Ankyrin-3 from Homo sapiens (Human).